The primary structure comprises 319 residues: uncharacterized protein (319 aa).

This is an uncharacterized protein from Bacillus subtilis (strain 168).